A 101-amino-acid chain; its full sequence is Small ribosomal subunit protein uS14 (101 aa).

This sequence belongs to the universal ribosomal protein uS14 family. As to quaternary structure, part of the 30S ribosomal subunit. Contacts proteins S3 and S10.

Its function is as follows. Binds 16S rRNA, required for the assembly of 30S particles and may also be responsible for determining the conformation of the 16S rRNA at the A site. This Ralstonia pickettii (strain 12J) protein is Small ribosomal subunit protein uS14.